The following is a 297-amino-acid chain: Homoserine kinase (297 aa).

Position 82–92 (82–92) interacts with ATP; sequence PLTRGLGSSAS.

It belongs to the GHMP kinase family. Homoserine kinase subfamily.

It localises to the cytoplasm. The enzyme catalyses L-homoserine + ATP = O-phospho-L-homoserine + ADP + H(+). It participates in amino-acid biosynthesis; L-threonine biosynthesis; L-threonine from L-aspartate: step 4/5. In terms of biological role, catalyzes the ATP-dependent phosphorylation of L-homoserine to L-homoserine phosphate. This Bacillus thuringiensis subsp. konkukian (strain 97-27) protein is Homoserine kinase.